A 924-amino-acid chain; its full sequence is Phosphatidate phosphatase LPIN1 (924 aa).

The N-LIP stretch occupies residues 1 to 108 (MNYVGQLAGQ…IPMYLATSPI (108 aa)). Phosphoserine is present on residues Ser106 and Ser150. Disordered stretches follow at residues 133–248 (PTTA…DCQR) and 269–297 (FHAS…ADRL). The segment covering 152–161 (GKKRRKRRRK) has biased composition (basic residues). The Nuclear localization signal motif lies at 153 to 158 (KKRRKR). Basic and acidic residues predominate over residues 162–172 (AQLDNLKRDDN). Residues 176-193 (SEDEDMFPIEMSSDEDTA) show a composition bias toward acidic residues. Polar residues-rich tracts occupy residues 218 to 229 (PSISTHPQSASY) and 273 to 284 (ESPSGSRPSTPK). Phosphoserine occurs at positions 285, 287, and 293. The span at 285-297 (SDSELVSKSADRL) shows a compositional bias: basic and acidic residues. A Phosphothreonine modification is found at Thr298. Disordered stretches follow at residues 314–426 (QAAK…SRHL) and 446–490 (LYFP…STSD). The residue at position 328 (Ser328) is a Phosphoserine. Positions 343–358 (AIHSESSDTFSDQSPT) are enriched in polar residues. Phosphoserine is present on Ser392. The segment covering 404-413 (NTAQSSSKTD) has biased composition (polar residues). Position 459 is an N6-acetyllysine (Lys459). Residues 461–476 (ASDNGARSANQSPQSV) are compositionally biased toward polar residues. Residues Ser468, Ser472, and Ser483 each carry the phosphoserine modification. Glycyl lysine isopeptide (Lys-Gly) (interchain with G-Cter in SUMO) cross-links involve residues Lys599 and Lys629. Residues 627–649 (RIKHESSSSDEEHAAAKPSGSSH) form a disordered region. Residues 628-641 (IKHESSSSDEEHAA) are compositionally biased toward basic and acidic residues. Lys629 carries the N6-acetyllysine modification. Phosphoserine occurs at positions 634 and 635. The tract at residues 658 to 864 (YKKTLRLTSE…VNPKGELVQE (207 aa)) is C-LIP. The short motif at 712-716 (DIDGT) is the DXDXT motif element. The short motif at 723–727 (LGHIL) is the LXXIL motif element. Residues Ser921 and Ser923 each carry the phosphoserine modification.

This sequence belongs to the lipin family. As to quaternary structure, interacts (via LXXIL motif) with PPARA. Interacts with PPARGC1A. Interaction with PPARA and PPARGC1A leads to the formation of a complex that modulates gene transcription. Interacts with MEF2C. Requires Mg(2+) as cofactor. Phosphorylated at multiple sites in response to insulin. Phosphorylation is controlled by the mTOR signaling pathway. Phosphorylation is decreased by epinephrine. Phosphorylation may not directly affect the catalytic activity but may regulate the localization. Dephosphorylated by the CTDNEP1-CNEP1R1 complex. In terms of processing, phosphorylated at multiple sites by mTOR in response to insulin, leading to its inactivation. Phosphorylation does not affect the catalytic activity but regulates the localization. Phosphorylation is decreased by epinephrine. Dephosphorylated by the CTDNEP1-CNEP1R1 complex. Dephosphorylation following mTOR inhibition promotes its activity. Post-translationally, sumoylation is important in brain and is marginal in other tissues. Sumoylation facilitates nuclear localization of isoform 2 in neuronals cells and its transcriptional coactivator activity. Acetylation at Lys-459 and Lys-629 by KAT5 in response to fatty acids promotes translocation to the endoplasmic reticulum and synthesis of diacylglycerol. As to expression, specifically expressed in skeletal muscle. Also expressed prominently in adipose tissue, and testis. Lower expression also detected in kidney, lung, brain and liver. In terms of tissue distribution, predominant isoform in the liver. Predominant isoform in the brain.

The protein resides in the mitochondrion outer membrane. The protein localises to the cytoplasm. It is found in the nucleus membrane. It localises to the nucleus. Its subcellular location is the endoplasmic reticulum membrane. It carries out the reaction a 1,2-diacyl-sn-glycero-3-phosphate + H2O = a 1,2-diacyl-sn-glycerol + phosphate. It catalyses the reaction 1-octadecanoyl-2-(4Z,7Z,10Z,13Z,16Z,19Z-docosahexaenoyl)-sn-glycero-3-phosphate + H2O = 1-octadecanoyl-2-(4Z,7Z,10Z,13Z,16Z,19Z-docosahexaenoyl)-sn-glycerol + phosphate. The enzyme catalyses 1-octadecanoyl-2-(5Z,8Z,11Z,14Z-eicosatetraenoyl)-sn-glycero-3-phosphate + H2O = 1-octadecanoyl-2-(5Z,8Z,11Z,14Z-eicosatetraenoyl)-sn-glycerol + phosphate. The catalysed reaction is 1-octadecanoyl-2-(9Z,12Z-octadecadienoyl)-sn-glycero-3-phosphate + H2O = 1-octadecanoyl-2-(9Z,12Z)-octadecadienoyl-sn-glycerol + phosphate. It carries out the reaction 1-octadecanoyl-2-(9Z-octadecenoyl)-sn-glycero-3-phosphate + H2O = 1-octadecanoyl-2-(9Z-octadecenoyl)-sn-glycerol + phosphate. It catalyses the reaction 1-hexadecanoyl-2-(4Z,7Z,10Z,13Z,16Z,19Z-docosahexaenoyl)-sn-glycero-3-phosphate + H2O = 1-hexadecanoyl-2-(4Z,7Z,10Z,13Z,16Z,19Z-docosahexaenoyl)-sn-glycerol + phosphate. The enzyme catalyses 1,2-dioctadecanoyl-sn-glycero-3-phosphate + H2O = 1,2-dioctadecanoyl-sn-glycerol + phosphate. The catalysed reaction is 1-hexadecanoyl-2-(5Z,8Z,11Z,14Z-eicosatetraenoyl)-sn-glycero-3-phosphate + H2O = 1-hexadecanoyl-2-(5Z,8Z,11Z,14Z-eicosatetraenoyl)-sn-glycerol + phosphate. It carries out the reaction 1-hexadecanoyl-2-(9Z,12Z-octadecadienoyl)-sn-glycero-3-phosphate + H2O = 1-hexadecanoyl-2-(9Z,12Z-octadecadienoyl)-sn-glycerol + phosphate. It catalyses the reaction 1-hexadecanoyl-2-(9Z-octadecenoyl)-sn-glycero-3-phosphate + H2O = 1-hexadecanoyl-2-(9Z-octadecenoyl)-sn-glycerol + phosphate. The enzyme catalyses 1,2-di-(4Z,7Z,10Z,13Z,16Z,19Z-docosahexaenoyl)-sn-glycero-3-phosphate + H2O = 1,2-di-(4Z,7Z,10Z,13Z,16Z,19Z-docosahexaenoyl)-sn-glycerol + phosphate. The catalysed reaction is 1,2-di-(5Z,8Z,11Z,14Z)-eicosatetraenoyl-sn-glycero-3-phosphate + H2O = 1,2-di-(5Z,8Z,11Z,14Z)-eicosatetraenoyl-sn-glycerol + phosphate. It carries out the reaction 1,2-di-(9Z,12Z-octadecadienoyl)-sn-glycero-3-phosphate + H2O = 1,2-di-(9Z,12Z-octadecadienoyl)-sn-glycerol + phosphate. It catalyses the reaction 1,2-di-(9Z-octadecenoyl)-sn-glycero-3-phosphate + H2O = 1,2-di-(9Z-octadecenoyl)-sn-glycerol + phosphate. The enzyme catalyses 1,2-dihexadecanoyl-sn-glycero-3-phosphate + H2O = 1,2-dihexadecanoyl-sn-glycerol + phosphate. Inhibited by N-ethylmaleimide treatment. In terms of biological role, acts as a magnesium-dependent phosphatidate phosphatase enzyme which catalyzes the conversion of phosphatidic acid to diacylglycerol during triglyceride, phosphatidylcholine and phosphatidylethanolamine biosynthesis and therefore controls the metabolism of fatty acids at different levels. Is involved in adipocyte differentiation. Also acts as nuclear transcriptional coactivator for PPARGC1A/PPARA regulatory pathway to modulate lipid metabolism gene expression. Functionally, recruited at the mitochondrion outer membrane and is involved in mitochondrial fission by converting phosphatidic acid to diacylglycerol. The chain is Phosphatidate phosphatase LPIN1 (Lpin1) from Mus musculus (Mouse).